Consider the following 74-residue polypeptide: Defensin J1-2 (74 aa).

The signal sequence occupies residues methionine 1 to alanine 27. 4 cysteine pairs are disulfide-bonded: cysteine 30–cysteine 74, cysteine 41–cysteine 61, cysteine 47–cysteine 68, and cysteine 51–cysteine 70.

The protein belongs to the DEFL family. As to quaternary structure, monomer. As to expression, expressed in flowers and in young fruits.

Its subcellular location is the secreted. Functionally, plant defense peptide with antifungal activity against F.oxysporum and B.cinerea. This is Defensin J1-2 from Capsicum annuum (Capsicum pepper).